Consider the following 473-residue polypeptide: Zinc transporter SLC39A7 (473 aa).

The chain crosses the membrane as a helical span at residues 11–31 (VAVGLLTWAALGLLVAGHGGH). Basic and acidic residues-rich tracts occupy residues 44–56 (GHSH…DFHH) and 66–114 (HTHE…EHSH). Residues 44–120 (GHSHRHSHED…EHSHGGYGES (77 aa)) form a disordered region. Position 66 is a pros-methylhistidine (histidine 66). Helical transmembrane passes span 138 to 158 (ALGA…LIPV), 169 to 189 (LQIL…LHLI), and 214 to 234 (GPIL…LVVE). Residues 243 to 316 (GHEHSHGHGH…QHSGEEKAGS (74 aa)) are disordered. Phosphoserine is present on residues serine 278 and serine 279. Residues 298-316 (RPKDGPVRPQHSGEEKAGS) show a composition bias toward basic and acidic residues. Residues 388 to 408 (LLTAVGALAGTAFALLTEGGA) traverse the membrane as a helical segment. The interval 428–473 (GDQAATQASPRSTSLPPVGEEDFREDPGPRQKGQQEKSGINVNCVS) is disordered. Positions 431 to 442 (AATQASPRSTSL) are enriched in polar residues. The segment covering 452 to 462 (EDPGPRQKGQQ) has biased composition (basic and acidic residues). Polar residues predominate over residues 463–473 (EKSGINVNCVS).

It belongs to the ZIP transporter (TC 2.A.5) family. KE4/Catsup subfamily. As to quaternary structure, homodimer. Methylation at some His residue by METTL9 leads to reduced zinc-binding. In terms of processing, rapidly phosphorylated by CK2 following Zn(2+) treatment. This phosphorylation is required for efficient cytosolic Zn(2+) release.

It is found in the endoplasmic reticulum membrane. It localises to the golgi apparatus. The protein resides in the cis-Golgi network membrane. It carries out the reaction Zn(2+)(in) = Zn(2+)(out). Functionally, transports Zn(2+) from the endoplasmic reticulum (ER)/Golgi apparatus to the cytosol, playing an essential role in the regulation of cytosolic zinc levels. Acts as a gatekeeper of zinc release from intracellular stores, requiring post-translational activation by phosphorylation on residues, resulting in activation of multiple downstream pathways leading to cell growth and proliferation. Has an essential role in B cell development and is required for proper B cell receptor signaling. Plays an important role in maintaining intestinal epithelial homeostasis and skin dermis development by regulating ER function. Controls cell signaling pathways involved in glucose metabolism in skeletal muscle. Has a protective role against ER stress in different biological contexts. Mediates Zn(2+)-induced ferroptosis. This Sus scrofa (Pig) protein is Zinc transporter SLC39A7 (SLC39A7).